A 337-amino-acid polypeptide reads, in one-letter code: Transaldolase (337 aa).

N6-acetyllysine is present on Lys-115. Catalysis depends on Lys-142, which acts as the Schiff-base intermediate with substrate. Lys-219 is modified (N6-acetyllysine). 2 positions are modified to phosphoserine: Ser-237 and Ser-256. Residues Lys-269, Lys-286, and Lys-321 each carry the N6-acetyllysine modification.

The protein belongs to the transaldolase family. Type 1 subfamily. As to quaternary structure, homodimer.

The protein localises to the cytoplasm. It catalyses the reaction D-sedoheptulose 7-phosphate + D-glyceraldehyde 3-phosphate = D-erythrose 4-phosphate + beta-D-fructose 6-phosphate. Its pathway is carbohydrate degradation; pentose phosphate pathway; D-glyceraldehyde 3-phosphate and beta-D-fructose 6-phosphate from D-ribose 5-phosphate and D-xylulose 5-phosphate (non-oxidative stage): step 2/3. Functionally, transaldolase is important for the balance of metabolites in the pentose-phosphate pathway. The sequence is that of Transaldolase (TALDO1) from Bos taurus (Bovine).